We begin with the raw amino-acid sequence, 826 residues long: BLOC-2 complex member HPS5 homolog (826 aa).

WD repeat units lie at residues lysine 22–isoleucine 61, asparagine 63–proline 102, and aspartate 110–leucine 149. The span at alanine 422–arginine 446 shows a compositional bias: polar residues. The tract at residues alanine 422–alanine 447 is disordered.

Belongs to the HPS5 family. As to expression, expressed in eye pigment granules.

Its function is as follows. Has a role in the biogenesis of eye pigment granules. Eye pigment granules are specialized forms of late endosomes or lysosomes. Biogenesis of pigment granules in the eye requires molecular components required for protein delivery to lysosomes. The polypeptide is BLOC-2 complex member HPS5 homolog (Drosophila melanogaster (Fruit fly)).